The sequence spans 617 residues: KIF-binding protein (617 aa).

Residues 48–83 form a disordered region; it reads ALLGPAPEDEDEPAADDGPGDQALGAGEPREAEGPG. A compositionally biased stretch (acidic residues) spans 54 to 66; sequence PEDEDEPAADDGP. Ser174 is modified (phosphoserine).

It belongs to the KIF-binding protein family. As to quaternary structure, interacts with KIF1B; positively regulates KIF1B microtubule motor activity. Interacts with STMN2. In terms of tissue distribution, in the embryo it is expressed in cortical neurons; expression increases during neuronal development.

It localises to the cytoplasm. The protein localises to the cytoskeleton. Functionally, activator of KIF1B plus-end-directed microtubule motor activity. Required for organization of axonal microtubules, and axonal outgrowth and maintenance during peripheral and central nervous system development. This is KIF-binding protein from Mus musculus (Mouse).